A 1451-amino-acid chain; its full sequence is Protein clueless (1451 aa).

2 disordered regions span residues 1-101 (MALE…EYAA) and 264-286 (KKTR…VSEP). Low complexity predominate over residues 9-53 (NSNATATGDATATKASSKAKENNNTAGGKKNLNPIPSQQNSNQNL). Positions 66–75 (GKKKGKKNRN) are enriched in basic residues. The residue at position 270 (Ser-270) is a Phosphoserine. The 243-residue stretch at 424 to 666 (RAEDAFSSKL…RTFPPDVNFL (243 aa)) folds into the Clu domain. 3 disordered regions span residues 722–775 (AKKQ…ESKT), 961–1012 (AVSS…SSVS), and 1413–1451 (ANNN…ATSS). Over residues 748 to 758 (GADKTDVKEEK) the composition is skewed to basic and acidic residues. A compositionally biased stretch (basic residues) spans 969 to 984 (KKRGNGGKHNKHKSSK). A compositionally biased stretch (low complexity) spans 989-1010 (QQQQQTTGNQNGSSSGTSNGSS).

Belongs to the CLU family.

The protein localises to the cytoplasm. Functionally, mRNA-binding protein involved in proper cytoplasmic distribution of mitochondria. The polypeptide is Protein clueless (Drosophila yakuba (Fruit fly)).